A 306-amino-acid polypeptide reads, in one-letter code: Methyl-CpG-binding domain-containing protein 7 (306 aa).

A compositionally biased stretch (polar residues) spans 1–11; sequence MQTRSSSSPSA. A disordered region spans residues 1-21; the sequence is MQTRSSSSPSANHRRETQLQI. MBD domains follow at residues 21-92, 106-171, and 172-242; these read IADP…QDKT, GVEY…RVLQ, and NRRG…ERLP. An asymmetric dimethylarginine mark is found at arginine 118, arginine 145, and arginine 174. The required for interaction with PRMT11 stretch occupies residues 163-306; that stretch reads IEQQLRVLQN…AFVSLIEDRS (144 aa).

In terms of assembly, interacts with PRMT11. Interacts (via C-terminus) with IDM2, but not with IDM1. Interacts with IDM3. Part of a complex made of MBD7, IDM1, IDM2 and IDM3. Methylated by PRMT11. Expressed in leaves, buds, flowers, stems, siliques, mature seeds and roots.

It localises to the nucleus. The protein resides in the chromosome. Functionally, transcriptional regulator that binds CpG islands in promoters where the DNA is methylated at position 5 of cytosine within CpG dinucleotides. May directly affect chromatin structure by inducing intra- and inter- chromatin compaction via bridging over multiple methylated CpG sites. Acts as an anti-silencing factor that prevents DNA hypermethylation and gene repression. Requires high mCG density for binding. Recognizes preferentially mCGs located in transposable elements. Required for active DNA demethylation. Prefers to target genomic loci around chromocenters. In Arabidopsis thaliana (Mouse-ear cress), this protein is Methyl-CpG-binding domain-containing protein 7.